The sequence spans 836 residues: Translation initiation factor IF-2 (836 aa).

A disordered region spans residues 1–234; it reads MSDTDGKKPL…SLAAMKRKQE (234 aa). Over residues 18–27 the composition is skewed to polar residues; that stretch reads SGQVKQSFSH. Positions 50 to 60 are enriched in low complexity; it reads SGSSTTTSSPS. The span at 88 to 156 shows a compositional bias: basic and acidic residues; it reads KLREVEDAKR…ATRRAEEAKR (69 aa). Residues 167–176 are compositionally biased toward low complexity; that stretch reads PAESRASAPP. The span at 185–206 shows a compositional bias: basic and acidic residues; sequence SRKEREREADRDRTTKKDDSRR. In terms of domain architecture, tr-type G spans 333–501; the sequence is PRPPIITIMG…NIALQAEILD (169 aa). The interval 342–349 is G1; the sequence is GHVDHGKT. Residue 342–349 participates in GTP binding; it reads GHVDHGKT. A G2 region spans residues 367–371; it reads GITQH. The G3 stretch occupies residues 389–392; it reads DTPG. GTP contacts are provided by residues 389–393 and 443–446; these read DTPGH and NKID. The segment at 443–446 is G4; the sequence is NKID. A G5 region spans residues 479-481; sequence SAK.

It belongs to the TRAFAC class translation factor GTPase superfamily. Classic translation factor GTPase family. IF-2 subfamily.

The protein resides in the cytoplasm. In terms of biological role, one of the essential components for the initiation of protein synthesis. Protects formylmethionyl-tRNA from spontaneous hydrolysis and promotes its binding to the 30S ribosomal subunits. Also involved in the hydrolysis of GTP during the formation of the 70S ribosomal complex. This Cereibacter sphaeroides (strain ATCC 17029 / ATH 2.4.9) (Rhodobacter sphaeroides) protein is Translation initiation factor IF-2.